The following is a 336-amino-acid chain: Fructose-1,6-bisphosphatase class 1 (336 aa).

The Mg(2+) site is built by Glu-90, Asp-112, Leu-114, and Asp-115. Substrate is bound by residues 115 to 118, Asn-211, and Lys-277; that span reads DGSS. A Mg(2+)-binding site is contributed by Glu-283.

The protein belongs to the FBPase class 1 family. In terms of assembly, homotetramer. Requires Mg(2+) as cofactor.

It localises to the cytoplasm. It carries out the reaction beta-D-fructose 1,6-bisphosphate + H2O = beta-D-fructose 6-phosphate + phosphate. It functions in the pathway carbohydrate biosynthesis; gluconeogenesis. This Pseudomonas savastanoi pv. phaseolicola (strain 1448A / Race 6) (Pseudomonas syringae pv. phaseolicola (strain 1448A / Race 6)) protein is Fructose-1,6-bisphosphatase class 1.